The primary structure comprises 351 residues: Epoxyqueuosine reductase (351 aa).

Asp-131 serves as the catalytic Proton donor. A 4Fe-4S ferredoxin-type domain is found at 177–205; that stretch reads EDQPVDYGCGSCTRCVDFCPTKALLGDGR. Cys-185, Cys-188, Cys-191, Cys-195, Cys-211, Cys-237, Cys-240, and Cys-244 together coordinate [4Fe-4S] cluster.

It belongs to the QueG family. Monomer. It depends on cob(II)alamin as a cofactor. [4Fe-4S] cluster serves as cofactor.

The protein localises to the cytoplasm. It carries out the reaction epoxyqueuosine(34) in tRNA + AH2 = queuosine(34) in tRNA + A + H2O. It functions in the pathway tRNA modification; tRNA-queuosine biosynthesis. Its function is as follows. Catalyzes the conversion of epoxyqueuosine (oQ) to queuosine (Q), which is a hypermodified base found in the wobble positions of tRNA(Asp), tRNA(Asn), tRNA(His) and tRNA(Tyr). This is Epoxyqueuosine reductase from Lactococcus garvieae (strain Lg2) (Enterococcus seriolicida).